Consider the following 212-residue polypeptide: UPF0502 protein ECA2523 (212 aa).

It belongs to the UPF0502 family.

This Pectobacterium atrosepticum (strain SCRI 1043 / ATCC BAA-672) (Erwinia carotovora subsp. atroseptica) protein is UPF0502 protein ECA2523.